The chain runs to 269 residues: Spermatogenesis-associated serine-rich protein 1 (269 aa).

A compositionally biased stretch (basic and acidic residues) spans 1-14 (MESSKDTQHGDALE). The interval 1-92 (MESSKDTQHG…SKVSLPEIPK (92 aa)) is disordered. Residues 18 to 38 (CLANRTSSRQNKRTSLSSSDG) show a composition bias toward polar residues. Phosphothreonine is present on Thr54. The span at 67 to 86 (SSSSSSSSSSAQSNRSSKVS) shows a compositional bias: low complexity. Phosphoserine is present on residues Ser72, Ser75, and Ser82.

This is Spermatogenesis-associated serine-rich protein 1 (Spats1) from Mus musculus (Mouse).